The sequence spans 542 residues: MLFRRLLTTKVGYHTPNYVNRRLILSVLKSTATRREAKDYLTKYGDPAVAYHCVLYLRGTKTFSAGLINDFAIMLGRLRLLGIRPLVVLSPSKHVMTESEILRETFYKHGLQSIPINEPMASGTRETILQNGASYNSIIPIIMPFVYHQQRAKRMLAEDEVAFMRELVAYMPCRIDKFFIINRYGGIPSSERHDNSHVFVNLSQEYGSLAEVLKQQITDLRHEMDDGLLAERRATDGSYKEFQYTTLTESLTDLELMSAVLSLLLPSSTGLITSMHSAVTNSRYNPLLYNVLTDRSLVSSSLPSFKRDPISDNAWYELPACGAKIGTQRANPIFSTTVLKQGVDIKLYDYSTLTKENSVGFHELLSTAGSAQLPAHKRVNLTKLKGIIEHSFDRNLDMSHYLKRINGKIASIIVIGDYEGIAILTYEGPEKRPFAYLDKFAVLPHLRGSLCISDVIFNLMFKKFGDELVWRSRRENVVNNWYFQRSVGVLDLSIDIGHGPKKDNIFKLFYYGGKKGTQFYDFDRLREYITYVRDIEPSWSRK.

Residues Met1–His14 constitute a mitochondrion transit peptide. The region spanning Ala368–Asp534 is the N-acetyltransferase domain.

This sequence belongs to the acetyltransferase family.

The protein localises to the mitochondrion. The enzyme catalyses L-glutamate + acetyl-CoA = N-acetyl-L-glutamate + CoA + H(+). The protein operates within amino-acid biosynthesis; L-arginine biosynthesis; N(2)-acetyl-L-ornithine from L-glutamate: step 1/4. Its function is as follows. N-acetylglutamate synthase involved in arginine biosynthesis. This is Amino-acid acetyltransferase, mitochondrial (ARG2) from Eremothecium gossypii (strain ATCC 10895 / CBS 109.51 / FGSC 9923 / NRRL Y-1056) (Yeast).